Reading from the N-terminus, the 484-residue chain is Chromosomal replication initiator protein DnaA (484 aa).

Residues 1-73 (MQEGKNIWSL…EILIEKGHST (73 aa)) are domain I, interacts with DnaA modulators. The domain II stretch occupies residues 73 to 140 (TINVEFIHSQ…EEIHIKYRNP (68 aa)). The interval 141-357 (FLKKKYTFEN…AAVTKLKAHI (217 aa)) is domain III, AAA+ region. Residues glycine 185, glycine 187, lysine 188, and threonine 189 each coordinate ATP. The segment at 358–484 (DLEDIEIDTN…IELMNKINKN (127 aa)) is domain IV, binds dsDNA.

It belongs to the DnaA family. As to quaternary structure, oligomerizes as a right-handed, spiral filament on DNA at oriC.

Its subcellular location is the cytoplasm. Plays an essential role in the initiation and regulation of chromosomal replication. ATP-DnaA binds to the origin of replication (oriC) to initiate formation of the DNA replication initiation complex once per cell cycle. Binds the DnaA box (a 9 base pair repeat at the origin) and separates the double-stranded (ds)DNA. Forms a right-handed helical filament on oriC DNA; dsDNA binds to the exterior of the filament while single-stranded (ss)DNA is stabiized in the filament's interior. The ATP-DnaA-oriC complex binds and stabilizes one strand of the AT-rich DNA unwinding element (DUE), permitting loading of DNA polymerase. After initiation quickly degrades to an ADP-DnaA complex that is not apt for DNA replication. Binds acidic phospholipids. The chain is Chromosomal replication initiator protein DnaA from Borrelia recurrentis (strain A1).